Reading from the N-terminus, the 367-residue chain is Phospho-N-acetylmuramoyl-pentapeptide-transferase (367 aa).

A run of 10 helical transmembrane segments spans residues 13–33, 49–69, 95–115, 119–139, 154–174, 183–203, 215–235, 237–257, 281–301, and 347–367; these read ISGI…ALTL, LPLL…VPLL, MGGI…SNFA, LAVS…DWQI, LALQ…NQPA, WVSF…FVLV, IDGL…AIVA, TSPA…GFLA, AVAL…IFFV, and VSSF…IAPF.

The protein belongs to the glycosyltransferase 4 family. MraY subfamily. Mg(2+) is required as a cofactor.

The protein localises to the cell inner membrane. The enzyme catalyses UDP-N-acetyl-alpha-D-muramoyl-L-alanyl-gamma-D-glutamyl-meso-2,6-diaminopimeloyl-D-alanyl-D-alanine + di-trans,octa-cis-undecaprenyl phosphate = di-trans,octa-cis-undecaprenyl diphospho-N-acetyl-alpha-D-muramoyl-L-alanyl-D-glutamyl-meso-2,6-diaminopimeloyl-D-alanyl-D-alanine + UMP. Its pathway is cell wall biogenesis; peptidoglycan biosynthesis. Catalyzes the initial step of the lipid cycle reactions in the biosynthesis of the cell wall peptidoglycan: transfers peptidoglycan precursor phospho-MurNAc-pentapeptide from UDP-MurNAc-pentapeptide onto the lipid carrier undecaprenyl phosphate, yielding undecaprenyl-pyrophosphoryl-MurNAc-pentapeptide, known as lipid I. The sequence is that of Phospho-N-acetylmuramoyl-pentapeptide-transferase from Trichormus variabilis (strain ATCC 29413 / PCC 7937) (Anabaena variabilis).